We begin with the raw amino-acid sequence, 198 residues long: Small ribosomal subunit protein eS1 (198 aa).

It belongs to the eukaryotic ribosomal protein eS1 family.

The polypeptide is Small ribosomal subunit protein eS1 (Nanoarchaeum equitans (strain Kin4-M)).